A 190-amino-acid chain; its full sequence is dITP/XTP pyrophosphatase (190 aa).

7–12 contributes to the substrate binding site; the sequence is THNPNK. The Mg(2+) site is built by glutamate 39 and aspartate 68. Residue aspartate 68 is the Proton acceptor of the active site. Substrate-binding positions include threonine 69, 148 to 151, lysine 171, and 176 to 177; these read FGYD and HR.

The protein belongs to the HAM1 NTPase family. In terms of assembly, homodimer. It depends on Mg(2+) as a cofactor.

The catalysed reaction is XTP + H2O = XMP + diphosphate + H(+). It catalyses the reaction dITP + H2O = dIMP + diphosphate + H(+). The enzyme catalyses ITP + H2O = IMP + diphosphate + H(+). In terms of biological role, pyrophosphatase that catalyzes the hydrolysis of nucleoside triphosphates to their monophosphate derivatives, with a high preference for the non-canonical purine nucleotides XTP (xanthosine triphosphate), dITP (deoxyinosine triphosphate) and ITP. Seems to function as a house-cleaning enzyme that removes non-canonical purine nucleotides from the nucleotide pool, thus preventing their incorporation into DNA/RNA and avoiding chromosomal lesions. In Christiangramia forsetii (strain DSM 17595 / CGMCC 1.15422 / KT0803) (Gramella forsetii), this protein is dITP/XTP pyrophosphatase.